Consider the following 122-residue polypeptide: Large ribosomal subunit protein uL14c (122 aa).

It belongs to the universal ribosomal protein uL14 family. In terms of assembly, part of the 50S ribosomal subunit.

It is found in the plastid. Its subcellular location is the chloroplast. Its function is as follows. Binds to 23S rRNA. This chain is Large ribosomal subunit protein uL14c, found in Phaseolus vulgaris (Kidney bean).